Here is a 229-residue protein sequence, read N- to C-terminus: Large ribosomal subunit protein uL1 (229 aa).

This sequence belongs to the universal ribosomal protein uL1 family. As to quaternary structure, part of the 50S ribosomal subunit.

Its function is as follows. Binds directly to 23S rRNA. The L1 stalk is quite mobile in the ribosome, and is involved in E site tRNA release. Protein L1 is also a translational repressor protein, it controls the translation of the L11 operon by binding to its mRNA. The chain is Large ribosomal subunit protein uL1 from Ureaplasma parvum serovar 3 (strain ATCC 27815 / 27 / NCTC 11736).